Reading from the N-terminus, the 141-residue chain is Large ribosomal subunit protein uL11 (141 aa).

It belongs to the universal ribosomal protein uL11 family. Part of the ribosomal stalk of the 50S ribosomal subunit. Interacts with L10 and the large rRNA to form the base of the stalk. L10 forms an elongated spine to which L12 dimers bind in a sequential fashion forming a multimeric L10(L12)X complex. In terms of processing, one or more lysine residues are methylated.

Functionally, forms part of the ribosomal stalk which helps the ribosome interact with GTP-bound translation factors. The sequence is that of Large ribosomal subunit protein uL11 from Chlamydia trachomatis serovar A (strain ATCC VR-571B / DSM 19440 / HAR-13).